The sequence spans 268 residues: Hydroxyethylthiazole kinase (268 aa).

Met45 serves as a coordination point for substrate. ATP-binding residues include Arg121 and Thr167. Gly194 contributes to the substrate binding site.

It belongs to the Thz kinase family. Mg(2+) serves as cofactor.

It catalyses the reaction 5-(2-hydroxyethyl)-4-methylthiazole + ATP = 4-methyl-5-(2-phosphooxyethyl)-thiazole + ADP + H(+). Its pathway is cofactor biosynthesis; thiamine diphosphate biosynthesis; 4-methyl-5-(2-phosphoethyl)-thiazole from 5-(2-hydroxyethyl)-4-methylthiazole: step 1/1. In terms of biological role, catalyzes the phosphorylation of the hydroxyl group of 4-methyl-5-beta-hydroxyethylthiazole (THZ). The protein is Hydroxyethylthiazole kinase of Bacillus anthracis (strain A0248).